We begin with the raw amino-acid sequence, 249 residues long: Coat protein (249 aa).

A disordered region spans residues Met1 to Gly28.

The protein belongs to the potexvirus capsid protein family.

The protein localises to the virion. Its function is as follows. Required for genome encapsidation. Forms ribonucleoprotein complexes along with TGB1 helicase and viral RNA. The chain is Coat protein from Solanum tuberosum (Potato).